Here is a 29-residue protein sequence, read N- to C-terminus: GLPVCGETCFGGTCNTPGCSCSYPICTRN.

The segment at residues 1 to 29 is a cross-link (cyclopeptide (Gly-Asn)); sequence GLPVCGETCFGGTCNTPGCSCSYPICTRN. Intrachain disulfides connect Cys-5–Cys-19, Cys-9–Cys-21, and Cys-14–Cys-26.

This is a cyclic peptide.

Functionally, probably participates in a plant defense mechanism. This Viola biflora (Yellow wood violet) protein is Cyclotide vibi-A.